The primary structure comprises 216 residues: Phosducin-like protein 3 (216 aa).

Residues 13 to 59 (AKTIEQQLDQQLDRLDNLDSDDLKVLREQRLREMKDLNNKKQEWLRN) are a coiled coil. The Phosducin domain maps to 29 to 163 (NLDSDDLKVL…DLGNCDDFAT (135 aa)).

It belongs to the phosducin family. In terms of tissue distribution, highly expressed in germline cells of the testis from the spermatogonia stage until the early spermatid stage but is no longer observed in late-stage spermatids in the distal end of the testis.

It catalyses the reaction [thioredoxin]-dithiol + NADP(+) = [thioredoxin]-disulfide + NADPH + H(+). Functionally, has redox activity with thioredoxin. Required for male fertility and maturation of sperm past the canoe stage during spermiogenesis. The protein is Phosducin-like protein 3 of Drosophila melanogaster (Fruit fly).